The primary structure comprises 219 residues: MATPWSLTAVEVDNVVFPPAVKPPSSADTFFLGGAGVRGLQIEDKFVKFTAIGIYLHDDALPFLAAKWNGKSDHELTESVEFFRDIVTGPFEKFMQVTMILPLTGQQYSEKVSENCVAIWKSLGIYTDAEAKAIDKFVSVFKDETFPPGSSILFTVSPKGSLGITFSKDGSTTTVIENKLLSEAVLESMIGKHGVSPAAKQSLASRLSGLFKAGGDTDK.

Positions 50, 115, and 188 each coordinate substrate.

It belongs to the chalcone isomerase family.

The enzyme catalyses a chalcone = a flavanone.. The protein operates within secondary metabolite biosynthesis; flavonoid biosynthesis. In terms of biological role, catalyzes the intramolecular cyclization of bicyclic chalcones into tricyclic (S)-flavanones. Responsible for the isomerization of 4,2',4',6'-tetrahydroxychalcone (also termed chalcone) into naringenin. This chain is Chalcone--flavanone isomerase (CHI), found in Clitoria ternatea (Butterfly pea).